The sequence spans 351 residues: L-threonine 3-dehydrogenase (351 aa).

Residue C39 coordinates Zn(2+). Active-site charge relay system residues include T41 and H44. Positions 64, 65, 94, 97, 100, and 108 each coordinate Zn(2+). NAD(+)-binding positions include I176, D196, R201, 271–273 (LGI), and 295–296 (IY).

Belongs to the zinc-containing alcohol dehydrogenase family. As to quaternary structure, homotetramer. Requires Zn(2+) as cofactor.

The protein resides in the cytoplasm. It carries out the reaction L-threonine + NAD(+) = (2S)-2-amino-3-oxobutanoate + NADH + H(+). It functions in the pathway amino-acid degradation; L-threonine degradation via oxydo-reductase pathway; glycine from L-threonine: step 1/2. Its function is as follows. Catalyzes the NAD(+)-dependent oxidation of L-threonine to 2-amino-3-ketobutyrate. The protein is L-threonine 3-dehydrogenase of Francisella tularensis subsp. tularensis (strain SCHU S4 / Schu 4).